The chain runs to 121 residues: Phosphoribosyl-ATP pyrophosphatase (121 aa).

The protein belongs to the PRA-PH family.

It is found in the cytoplasm. The catalysed reaction is 1-(5-phospho-beta-D-ribosyl)-ATP + H2O = 1-(5-phospho-beta-D-ribosyl)-5'-AMP + diphosphate + H(+). The protein operates within amino-acid biosynthesis; L-histidine biosynthesis; L-histidine from 5-phospho-alpha-D-ribose 1-diphosphate: step 2/9. This Burkholderia vietnamiensis (strain G4 / LMG 22486) (Burkholderia cepacia (strain R1808)) protein is Phosphoribosyl-ATP pyrophosphatase.